We begin with the raw amino-acid sequence, 88 residues long: ATP synthase epsilon chain (88 aa).

It belongs to the ATPase epsilon chain family. F-type ATPases have 2 components, CF(1) - the catalytic core - and CF(0) - the membrane proton channel. CF(1) has five subunits: alpha(3), beta(3), gamma(1), delta(1), epsilon(1). CF(0) has three main subunits: a, b and c.

The protein localises to the cell inner membrane. In terms of biological role, produces ATP from ADP in the presence of a proton gradient across the membrane. The sequence is that of ATP synthase epsilon chain (atpC) from Chlorobium limicola.